A 162-amino-acid polypeptide reads, in one-letter code: Phosphopantetheine adenylyltransferase (162 aa).

Thr-10 lines the substrate pocket. ATP contacts are provided by residues 10-11 and His-18; that span reads TF. Substrate-binding residues include Lys-42, Leu-74, and Arg-88. ATP contacts are provided by residues 89–91, Glu-99, and 124–130; these read GLR and FSCISST.

The protein belongs to the bacterial CoaD family. As to quaternary structure, homohexamer. The cofactor is Mg(2+).

The protein resides in the cytoplasm. The catalysed reaction is (R)-4'-phosphopantetheine + ATP + H(+) = 3'-dephospho-CoA + diphosphate. The protein operates within cofactor biosynthesis; coenzyme A biosynthesis; CoA from (R)-pantothenate: step 4/5. Functionally, reversibly transfers an adenylyl group from ATP to 4'-phosphopantetheine, yielding dephospho-CoA (dPCoA) and pyrophosphate. The polypeptide is Phosphopantetheine adenylyltransferase (Francisella philomiragia subsp. philomiragia (strain ATCC 25017 / CCUG 19701 / FSC 153 / O#319-036)).